The following is a 368-amino-acid chain: Seipin-1 (368 aa).

A run of 3 helical transmembrane segments spans residues 26–46, 101–121, and 292–312; these read WFMV…VVLS, VMVL…SLYV, and LCVW…LWCF. The disordered stretch occupies residues 344-368; the sequence is MERRRRERRNQPRRRNFATTQKSYT. The segment covering 346-359 has biased composition (basic residues); that stretch reads RRRRERRNQPRRRN.

It belongs to the seipin family. Expressed in seeds and young seedlings. Not detected in leaves.

It is found in the endoplasmic reticulum membrane. Functionally, involved in lipid metabolism and lipid droplet (LD) morphology, number, and size. Facilitates the formation of large-sized LDs and modulates triacylglycerol accumulation. Induces probably a reorganization of the endoplasmic reticulum into LD-forming domains. The chain is Seipin-1 from Arabidopsis thaliana (Mouse-ear cress).